Consider the following 551-residue polypeptide: Glucans biosynthesis protein D (551 aa).

Residues 1–32 (MNRRRFIKGSMAMAAVCGSSGIASLFSQAAFA) constitute a signal peptide (tat-type signal).

This sequence belongs to the OpgD/OpgG family. Post-translationally, predicted to be exported by the Tat system. The position of the signal peptide cleavage has not been experimentally proven.

Its subcellular location is the periplasm. It participates in glycan metabolism; osmoregulated periplasmic glucan (OPG) biosynthesis. In terms of biological role, probably involved in the control of the structural glucose backbone of osmoregulated periplasmic glucans (OPGs). The chain is Glucans biosynthesis protein D (mdoD) from Salmonella typhimurium (strain LT2 / SGSC1412 / ATCC 700720).